The primary structure comprises 402 residues: Succinyl-CoA--D-citramalate CoA-transferase (402 aa).

The active-site Nucleophile is the aspartate 174.

This sequence belongs to the CoA-transferase III family. As to quaternary structure, homodimer.

The enzyme catalyses (3R)-citramalate + succinyl-CoA = (3R)-citramalyl-CoA + succinate. It carries out the reaction (R)-malate + succinyl-CoA = (R)-malyl-CoA + succinate. In terms of biological role, involved in the 3-hydroxypropionate cycle used for autotrophic carbon dioxide fixation, and in the glyoxylate assimilation cycle used to regenerate acetyl-CoA and produce pyruvate as universal precursor for biosynthesis. Catalyzes the transfer of CoA moiety from succinyl-CoA to D-citramalate to yield citramalyl-CoA. This is Succinyl-CoA--D-citramalate CoA-transferase from Chloroflexus aurantiacus (strain ATCC 29366 / DSM 635 / J-10-fl).